The primary structure comprises 77 residues: EMBRYO SURROUNDING FACTOR 1-like protein 6 (77 aa).

An N-terminal signal peptide occupies residues 1–25 (MSPSHFAILFIIVISLVPLHGYANG). Disulfide bonds link Cys-38/Cys-53, Cys-43/Cys-72, Cys-51/Cys-68, and Cys-54/Cys-61.

This sequence belongs to the MEG family.

This Arabidopsis thaliana (Mouse-ear cress) protein is EMBRYO SURROUNDING FACTOR 1-like protein 6 (ESFL6).